The following is a 381-amino-acid chain: Endolytic peptidoglycan transglycosylase RlpA (381 aa).

An N-terminal signal peptide occupies residues 1–19 (MRKQLPVICVAAGIVLLAA). Cys-20 carries N-palmitoyl cysteine lipidation. Cys-20 carries the S-diacylglycerol cysteine lipid modification. A disordered region spans residues 196–274 (LPPRPDLSGG…QPAPVSAPVA (79 aa)). Residues 208-218 (SASSAPAQPQG) are compositionally biased toward low complexity. In terms of domain architecture, SPOR spans 304–380 (AAASGRFVVQ…AQLQSFIASA (77 aa)).

Belongs to the RlpA family.

The protein localises to the cell membrane. Functionally, lytic transglycosylase with a strong preference for naked glycan strands that lack stem peptides. The chain is Endolytic peptidoglycan transglycosylase RlpA from Salmonella typhimurium (strain LT2 / SGSC1412 / ATCC 700720).